The sequence spans 609 residues: (R)-linalool synthase TPS5, chloroplastic (609 aa).

The transit peptide at 1 to 42 directs the protein to the chloroplast; that stretch reads MVSILSNIGMMVVTFKRPSLFTSLRRRSANNIIITKHSHPIS. Residues Arg325, Asp362, Asp366, Arg503, and Asp506 each coordinate (2E)-geranyl diphosphate. Mg(2+) contacts are provided by Asp362 and Asp366. Residues 362-366 carry the DDXXD motif motif; that stretch reads DDIYD. Positions 506, 510, and 514 each coordinate Mg(2+).

Belongs to the terpene synthase family. Tpsb subfamily. Mg(2+) is required as a cofactor. It depends on Mn(2+) as a cofactor. Highly expressed in young fruits and plant tops. Expressed in flower buds and trichomes of petioles and stems. Expressed at low levels in young leaves, stems, petioles, sepals and petals.

The protein resides in the plastid. Its subcellular location is the chloroplast. It carries out the reaction (2E)-geranyl diphosphate + H2O = (R)-linalool + diphosphate. The catalysed reaction is (2E,6E)-farnesyl diphosphate + H2O = (6E)-nerolidol + diphosphate. It participates in secondary metabolite biosynthesis; terpenoid biosynthesis. Involved in monoterpene (C10) biosynthesis in glandular trichomes. Converts geranyl diphosphate to linalool in glandular trichomes in response to jasmonate (JA). Can convert farnesyl diphosphate to nerolidol in vitro. The polypeptide is (R)-linalool synthase TPS5, chloroplastic (Solanum lycopersicum (Tomato)).